We begin with the raw amino-acid sequence, 79 residues long: MVKLRLKRCGRKQRAVYRILAIDVRYRREGRDLSKVGFYDPITNQTFLNLSAILDFLKKGAQPTRTAHDISKKAGIFTE.

It belongs to the bacterial ribosomal protein bS16 family.

It is found in the plastid. It localises to the chloroplast. This Arabidopsis thaliana (Mouse-ear cress) protein is Small ribosomal subunit protein bS16cz.